The sequence spans 61 residues: Type IV secretion system protein PtlI homolog (61 aa).

An N-terminal signal peptide occupies residues 1–25; the sequence is MIHAHSNARLLRWAILAIAPATLGA. The interval 29 to 61 is disordered; sequence NGPPGLPYPDGKPLIPINTAAPEQGSSCQTRAP. Positions 52–61 are enriched in polar residues; it reads QGSSCQTRAP.

This Bordetella bronchiseptica (strain ATCC BAA-588 / NCTC 13252 / RB50) (Alcaligenes bronchisepticus) protein is Type IV secretion system protein PtlI homolog (ptlI).